The primary structure comprises 500 residues: Kynurenine 3-monooxygenase acdD (500 aa).

FAD contacts are provided by residues Val17 and 36-38; that span reads ELR. Residue Asn50 is glycosylated (N-linked (GlcNAc...) asparagine). Ala58 is a binding site for FAD. Positions 89 and 106 each coordinate L-kynurenine. The FAD site is built by Arg118 and Leu143. N-linked (GlcNAc...) asparagine glycosylation occurs at Asn163. FAD is bound by residues Asp321 and 332 to 335; that span reads QGLN. L-kynurenine is bound by residues Asn392 and Tyr428. Residues 451–471 form a helical membrane-spanning segment; the sequence is LLLYGSISAIISSAAIVGVLA.

The protein belongs to the aromatic-ring hydroxylase family. KMO subfamily. The cofactor is FAD.

It localises to the mitochondrion outer membrane. The enzyme catalyses L-kynurenine + NADPH + O2 + H(+) = 3-hydroxy-L-kynurenine + NADP(+) + H2O. It functions in the pathway secondary metabolite biosynthesis. Its pathway is cofactor biosynthesis; NAD(+) biosynthesis; quinolinate from L-kynurenine: step 1/3. Indoleamine 2,3-dioxygenase; part of the gene cluster that mediates the biosynthesis of aspcandine, a pyrrolobenzazepine alkaloid. Initially, the indoleamine 2,3-dioxygenase acdA accepts L-tryptophan and performs the oxidative opening of the indole ring to yield N'-formyl-L-kynurenine, which undergoes the spontaneous deformylation reaction to provide L-kynurenine. The kynurenine 3-monooxygenase acdD then hydroxylates L-kynurenine to afford 3-hydroxy-L-kynurenine. 3-hydroxy-L-kynurenine is activated by the A domain of the NRPS-PKS acdB and subsequently loaded onto the enzyme. The KS domain conducts the decarboxylative condensation of the 3-hydroxy-L-kynurenyl and malonyl moieties, and subsequent nucleophilic attacks by the two amino groups would occur nonenzymatically at two distinct positions, achieving the chain release and the construction of the tricyclic system. Finally, the dehydration reaction completes the biosynthesis to yield aspcandine. The protein is Kynurenine 3-monooxygenase acdD of Aspergillus candidus.